Here is a 3127-residue protein sequence, read N- to C-terminus: Probable polyketide synthase 33 (3127 aa).

A Ketosynthase family 3 (KS3) domain is found at 24–457; sequence SGDVAVVGIG…GSNVCLILSE (434 aa). Residues C196, H335, and H380 each act as for beta-ketoacyl synthase activity in the active site. The acyl/malonyl transferase stretch occupies residues 660-693; it reads GVSADIIIGHSLGEISSAYCSGMIDFQTLCYLTY. Catalysis depends on S670, which acts as the For acyl/malonyl transferase activity. Residues 958–1080 form an N-terminal hotdog fold region; it reads GPSIHSLGNN…GNFSLFKHNI (123 aa). The 300-residue stretch at 958–1257 folds into the PKS/mFAS DH domain; sequence GPSIHSLGNN…CTIVGSNPDS (300 aa). The Proton acceptor; for dehydratase activity role is filled by H992. The interval 1096–1257 is C-terminal hotdog fold; the sequence is NFTTISKQDF…CTIVGSNPDS (162 aa). Residue D1168 is the Proton donor; for dehydratase activity of the active site. Residues 1369–1394 form a disordered region; sequence SNNNNNNNNNNNNNNNNNNNNKNNGY. The span at 1370–1394 shows a compositional bias: low complexity; sequence NNNNNNNNNNNNNNNNNNNNKNNGY. One can recognise a Carrier domain in the interval 2539 to 2616; it reads SNNEIIRSTI…QSIEIIKSAH (78 aa). S2576 carries the post-translational modification O-(pantetheine 4'-phosphoryl)serine. The segment at 2617 to 2659 is disordered; it reads NKNNNNNNINNNNNNNNNNNNNNNNNNNNNNNNNNNNNNNNNN. The stretch at 2617–2671 forms a coiled coil; the sequence is NKNNNNNNINNNNNNNNNNNNNNNNNNNNNNNNNNNNNNNNNNLVKKEQQSLDEF. A helical transmembrane segment spans residues 2937 to 2957; sequence VLTLYNIPITIFIAILIIDIF.

Requires pantetheine 4'-phosphate as cofactor.

It localises to the membrane. Its function is as follows. Probable polyketide synthase. This is Probable polyketide synthase 33 (pks33) from Dictyostelium discoideum (Social amoeba).